The chain runs to 403 residues: Argininosuccinate synthase (403 aa).

ATP contacts are provided by residues 13 to 21 and Ala-40; that span reads AYSGGLDTS. 2 residues coordinate L-citrulline: Tyr-91 and Ser-96. An ATP-binding site is contributed by Gly-121. Residues Thr-123, Asn-127, and Asp-128 each contribute to the L-aspartate site. Asn-127 contributes to the L-citrulline binding site. 5 residues coordinate L-citrulline: Arg-131, Ser-180, Ser-189, Glu-265, and Tyr-277.

Belongs to the argininosuccinate synthase family. Type 1 subfamily. Homotetramer.

The protein localises to the cytoplasm. It catalyses the reaction L-citrulline + L-aspartate + ATP = 2-(N(omega)-L-arginino)succinate + AMP + diphosphate + H(+). It functions in the pathway amino-acid biosynthesis; L-arginine biosynthesis; L-arginine from L-ornithine and carbamoyl phosphate: step 2/3. This is Argininosuccinate synthase from Leptospira interrogans serogroup Icterohaemorrhagiae serovar Lai (strain 56601).